Reading from the N-terminus, the 100-residue chain is Urease subunit gamma (100 aa).

Belongs to the urease gamma subunit family. Heterotrimer of UreA (gamma), UreB (beta) and UreC (alpha) subunits. Three heterotrimers associate to form the active enzyme.

It is found in the cytoplasm. The enzyme catalyses urea + 2 H2O + H(+) = hydrogencarbonate + 2 NH4(+). Its pathway is nitrogen metabolism; urea degradation; CO(2) and NH(3) from urea (urease route): step 1/1. The protein is Urease subunit gamma of Chelativorans sp. (strain BNC1).